We begin with the raw amino-acid sequence, 261 residues long: Imidazole glycerol phosphate synthase subunit HisF (261 aa).

Catalysis depends on residues Asp11 and Asp130.

The protein belongs to the HisA/HisF family. As to quaternary structure, heterodimer of HisH and HisF.

It localises to the cytoplasm. The catalysed reaction is 5-[(5-phospho-1-deoxy-D-ribulos-1-ylimino)methylamino]-1-(5-phospho-beta-D-ribosyl)imidazole-4-carboxamide + L-glutamine = D-erythro-1-(imidazol-4-yl)glycerol 3-phosphate + 5-amino-1-(5-phospho-beta-D-ribosyl)imidazole-4-carboxamide + L-glutamate + H(+). The protein operates within amino-acid biosynthesis; L-histidine biosynthesis; L-histidine from 5-phospho-alpha-D-ribose 1-diphosphate: step 5/9. Functionally, IGPS catalyzes the conversion of PRFAR and glutamine to IGP, AICAR and glutamate. The HisF subunit catalyzes the cyclization activity that produces IGP and AICAR from PRFAR using the ammonia provided by the HisH subunit. The chain is Imidazole glycerol phosphate synthase subunit HisF from Jannaschia sp. (strain CCS1).